The primary structure comprises 213 residues: Ferric nitrobindin-like protein (213 aa).

Residues 17-42 (VNLAAEQSKSTSDKNLPEFGDMPIPD) are disordered. The GXWXGXG signature appears at 65 to 71 (GVWRGQG).

This sequence belongs to the nitrobindin family.

In Corynebacterium jeikeium (strain K411), this protein is Ferric nitrobindin-like protein.